Consider the following 101-residue polypeptide: Unclassified hydrophobin dewD (101 aa).

The N-terminal stretch at 1-21 (MHLSTSAAAILALSLAGPTMA) is a signal peptide. 4 disulfides stabilise this stretch: cysteine 27-cysteine 81, cysteine 41-cysteine 73, cysteine 42-cysteine 60, and cysteine 82-cysteine 91.

Self-assembles to form functional amyloid fibrils called rodlets. Self-assembly into fibrillar rodlets occurs spontaneously at hydrophobic:hydrophilic interfaces and the rodlets further associate laterally to form amphipathic monolayers.

It localises to the secreted. It is found in the spore wall. Aerial growth, conidiation, and dispersal of filamentous fungi in the environment rely upon a capability of their secreting small amphipathic proteins called hydrophobins (HPBs) with low sequence identity. Class I can self-assemble into an outermost layer of rodlet bundles on aerial cell surfaces, conferring cellular hydrophobicity that supports fungal growth, development and dispersal; whereas Class II form highly ordered films at water-air interfaces through intermolecular interactions but contribute nothing to the rodlet structure. DewD is an unclassified hydrophobin that contributes to the hydrophobicity of the spore surface. The protein is Unclassified hydrophobin dewD of Emericella nidulans (strain FGSC A4 / ATCC 38163 / CBS 112.46 / NRRL 194 / M139) (Aspergillus nidulans).